We begin with the raw amino-acid sequence, 82 residues long: Large ribosomal subunit protein uL23 (82 aa).

The protein belongs to the universal ribosomal protein uL23 family. In terms of assembly, part of the 50S ribosomal subunit. Contacts protein L29.

Its function is as follows. Binds to 23S rRNA. One of the proteins that surrounds the polypeptide exit tunnel on the outside of the ribosome. This chain is Large ribosomal subunit protein uL23, found in Methanosarcina mazei (strain ATCC BAA-159 / DSM 3647 / Goe1 / Go1 / JCM 11833 / OCM 88) (Methanosarcina frisia).